Here is a 208-residue protein sequence, read N- to C-terminus: Cytochrome c oxidase assembly protein CtaG (208 aa).

The Cytoplasmic portion of the chain corresponds to 1–19 (MKQRPTGPDTTPRNRRGFG). Residues 20-42 (RDTAVASVCGLVVALMVGASYAA) traverse the membrane as a helical; Signal-anchor for type II membrane protein segment. Topologically, residues 43 to 208 (VPFYNWFCRV…SEAGPRQGAL (166 aa)) are periplasmic.

This sequence belongs to the COX11/CtaG family.

It localises to the cell inner membrane. In terms of biological role, exerts its effect at some terminal stage of cytochrome c oxidase synthesis, probably by being involved in the insertion of the copper B into subunit I. The protein is Cytochrome c oxidase assembly protein CtaG of Rhodopseudomonas palustris (strain BisA53).